The following is a 117-amino-acid chain: Fluoride-specific ion channel FluC 2 (117 aa).

Transmembrane regions (helical) follow at residues 1–21 (MITI…RALI), 33–53 (IPIA…FMMG), 61–81 (MFPF…TLSS), and 94–114 (IRFV…CFYG). Na(+) is bound by residues glycine 71 and threonine 74.

It belongs to the fluoride channel Fluc/FEX (TC 1.A.43) family.

The protein resides in the cell membrane. The enzyme catalyses fluoride(in) = fluoride(out). Its activity is regulated as follows. Na(+) is not transported, but it plays an essential structural role and its presence is essential for fluoride channel function. Fluoride-specific ion channel. Important for reducing fluoride concentration in the cell, thus reducing its toxicity. The protein is Fluoride-specific ion channel FluC 2 of Staphylococcus epidermidis (strain ATCC 35984 / DSM 28319 / BCRC 17069 / CCUG 31568 / BM 3577 / RP62A).